A 386-amino-acid polypeptide reads, in one-letter code: Palmitoyltransferase ZDHHC9 (386 aa).

Over 1–35 (MSAVMITRKITRKWEKLPGKNTFCCDGRVMMARQK) the chain is Cytoplasmic. A helical membrane pass occupies residues 36–56 (GVFYLTLFLIVGTCSLFFAFE). Residues 57 to 63 (CPYLAVH) lie on the Lumenal side of the membrane. Residues 64–84 (LSPAIPVFAVLLFVFVMAMLL) traverse the membrane as a helical segment. The Cytoplasmic segment spans residues 85–183 (RTSFSDPGVL…NCVGKRNYRY (99 aa)). One can recognise a DHHC domain in the interval 139-189 (KYCYTCKIFRPPRASHCSICDNCVDRFDHHCPWVGNCVGKRNYRYFYLFTL). Cys169 functions as the S-palmitoyl cysteine intermediate in the catalytic mechanism. The chain crosses the membrane as a helical span at residues 184 to 204 (FYLFTLSLSLLTIYIFAFDIV). Topologically, residues 205 to 224 (HVVLRSVDSGFVNTLKETPG) are lumenal. A helical membrane pass occupies residues 225–245 (TVLEVLVCFFTLWSVVGLTGF). Topologically, residues 246 to 386 (HTYLISLNQT…APAVIKESTH (141 aa)) are cytoplasmic. Residues 306–334 (SCSSAPSNGATTVPVNKSSNPATQTTKSS) are compositionally biased toward polar residues. Positions 306–386 (SCSSAPSNGA…APAVIKESTH (81 aa)) are disordered.

Belongs to the DHHC palmitoyltransferase family. ERF2/ZDHHC9 subfamily.

The protein localises to the endoplasmic reticulum membrane. Its subcellular location is the golgi apparatus membrane. The enzyme catalyses L-cysteinyl-[protein] + hexadecanoyl-CoA = S-hexadecanoyl-L-cysteinyl-[protein] + CoA. Palmitoyltransferase that catalyzes the addition of palmitate onto various protein substrates, such as ADRB2, GSDMD, HRAS, NRAS and CGAS. This chain is Palmitoyltransferase ZDHHC9, found in Danio rerio (Zebrafish).